Consider the following 533-residue polypeptide: Lysine--tRNA ligase (533 aa).

The 'HIGH' region motif lies at 28 to 36 (PSGHIHIGN). A 'KMSKS' region motif is present at residues 278–282 (PMSSS).

The protein belongs to the class-I aminoacyl-tRNA synthetase family.

The protein localises to the cytoplasm. The enzyme catalyses tRNA(Lys) + L-lysine + ATP = L-lysyl-tRNA(Lys) + AMP + diphosphate. This is Lysine--tRNA ligase (lysS) from Methanococcus maripaludis (strain DSM 14266 / JCM 13030 / NBRC 101832 / S2 / LL).